A 306-amino-acid polypeptide reads, in one-letter code: Dirigent protein 24 (306 aa).

An N-terminal signal peptide occupies residues 1-21 (MAKALSLTIFLFLLIASNVQS). Residues 36–61 (PQVPEEEDDSPQAVTTTPTPIPLPGP) are disordered.

Belongs to the plant dirigent protein family. As to quaternary structure, homodimer.

It is found in the secreted. It localises to the extracellular space. The protein localises to the apoplast. Its function is as follows. Dirigent proteins impart stereoselectivity on the phenoxy radical-coupling reaction, yielding optically active lignans from two molecules of coniferyl alcohol in the biosynthesis of lignans, flavonolignans, and alkaloids and thus plays a central role in plant secondary metabolism. The sequence is that of Dirigent protein 24 (DIR24) from Arabidopsis thaliana (Mouse-ear cress).